We begin with the raw amino-acid sequence, 407 residues long: E3 ubiquitin-protein ligase TRIM13 (407 aa).

The RING-type zinc finger occupies 10–58; sequence CPICCSLFDDPRVLPCSHNFCKKCLEGLLEGNVRNSLWRPSPFKCPTCR. The segment at 89–131 adopts a B box-type zinc-finger fold; sequence PKMPVCKEHLGQPLNIFCVTDMQLICGVCATRGSHTKHVFSSI. Residues Cys94, His97, Cys117, and His123 each contribute to the Zn(2+) site. Positions 172-200 form a coiled coil; sequence LQLLTKDSDKVKEFFEKLQHTLDQKKNEI. A helical membrane pass occupies residues 316–336; that stretch reads LLLMAVVLLGLLVFFGPTVFL.

In terms of assembly, interacts (via C-terminal domain) with VCP. Interacts with AKT1; the interaction ubiquitinates AKT1 and leads to its proteasomal degradation. Interacts with MDM2; the interaction ubiquitinates AKT1 and leads to its proteasomal degradation. Interacts with p62/SQSTM1. Interacts with TRAF6. Interacts with IKBKG/NEMO. Post-translationally, auto-ubiquitinated; requires the RING-type zinc finger. Auto-polyubiquitination leads to proteasomal degradation.

It localises to the endoplasmic reticulum membrane. The catalysed reaction is S-ubiquitinyl-[E2 ubiquitin-conjugating enzyme]-L-cysteine + [acceptor protein]-L-lysine = [E2 ubiquitin-conjugating enzyme]-L-cysteine + N(6)-ubiquitinyl-[acceptor protein]-L-lysine.. The protein operates within protein modification; protein ubiquitination. Functionally, endoplasmic reticulum (ER) membrane anchored E3 ligase involved in the retrotranslocation and turnover of membrane and secretory proteins from the ER through a set of processes named ER-associated degradation (ERAD). This process acts on misfolded proteins as well as in the regulated degradation of correctly folded proteins. Enhances ionizing radiation-induced p53/TP53 stability and apoptosis via ubiquitinating MDM2 and AKT1 and decreasing AKT1 kinase activity through MDM2 and AKT1 proteasomal degradation. Regulates ER stress-induced autophagy, and may act as a tumor suppressor. Also plays a role in innate immune response by stimulating NF-kappa-B activity in the TLR2 signaling pathway. Ubiquitinates TRAF6 via the 'Lys-29'-linked polyubiquitination chain resulting in NF-kappa-B activation. Participates as well in T-cell receptor-mediated NF-kappa-B activation. In the presence of TNF, modulates the IKK complex by regulating IKBKG/NEMO ubiquitination leading to the repression of NF-kappa-B. This Rattus norvegicus (Rat) protein is E3 ubiquitin-protein ligase TRIM13 (Trim13).